Reading from the N-terminus, the 235-residue chain is MRRGAPQDQELVGPGAPGRGSRGAPPPSGPVVPVLVFPPDLVFRADQRSGPRQLLTLYNPTGAVLRFRVLCTAPAKYTVFDAEGYVKPQSCIDIVIRHVAPHPRNYDVQDRFRIELSEEGTEGRVVGRKDITSVLRAPAYPLELQGQSDPTPHPEPHSWTASSTAQPFPENPHPQLATSSFLLFLLMGTVSVAFLLLPLQDELGSQLPQILHVSLGQKLVAAYVLGLLTMVFLRT.

2 disordered regions span residues 1-30 (MRRG…PSGP) and 143-170 (ELQG…PFPE). Residues 33–145 (PVLVFPPDLV…RAPAYPLELQ (113 aa)) enclose the MSP domain. Helical transmembrane passes span 180–200 (SFLL…LPLQ) and 213–233 (VSLG…MVFL).

It localises to the membrane. The protein is Motile sperm domain-containing protein 3 (MOSPD3) of Bos taurus (Bovine).